A 317-amino-acid polypeptide reads, in one-letter code: 1-phosphofructokinase (317 aa).

ATP is bound by residues 223–228 (SMGAEG) and 254–255 (GD). Residue Asp-255 is the Proton acceptor of the active site.

This sequence belongs to the carbohydrate kinase PfkB family.

It catalyses the reaction beta-D-fructose 1-phosphate + ATP = beta-D-fructose 1,6-bisphosphate + ADP + H(+). Its function is as follows. Catalyzes the ATP-dependent phosphorylation of fructose-l-phosphate to fructose-l,6-bisphosphate. This Vibrio cholerae serotype O1 (strain ATCC 39315 / El Tor Inaba N16961) protein is 1-phosphofructokinase.